Here is a 608-residue protein sequence, read N- to C-terminus: Threonine--tRNA ligase (608 aa).

Residues 1-143 form an editing domain region; it reads MRVLYIHAER…SFKPEEGRAD (143 aa). 2 catalytic regions span residues 194–490 and 195–490; these read PKYL…PRLP and KYLE…PRLP. Zn(2+) contacts are provided by Cys-287, His-338, and His-459.

Belongs to the class-II aminoacyl-tRNA synthetase family. In terms of assembly, homodimer. It depends on Zn(2+) as a cofactor.

It is found in the cytoplasm. It carries out the reaction tRNA(Thr) + L-threonine + ATP = L-threonyl-tRNA(Thr) + AMP + diphosphate + H(+). In terms of biological role, catalyzes the attachment of threonine to tRNA(Thr) in a two-step reaction: L-threonine is first activated by ATP to form Thr-AMP and then transferred to the acceptor end of tRNA(Thr). Also edits incorrectly charged L-seryl-tRNA(Thr). The polypeptide is Threonine--tRNA ligase (Pyrobaculum aerophilum (strain ATCC 51768 / DSM 7523 / JCM 9630 / CIP 104966 / NBRC 100827 / IM2)).